We begin with the raw amino-acid sequence, 438 residues long: Transmembrane protein 184C (438 aa).

The next 7 membrane-spanning stretches (helical) occupy residues 17–37 (LVAV…VWEL), 48–68 (AWFI…WVIL), 86–106 (ILWM…YPGI), 179–199 (YTVV…LGIY), 212–232 (YLVI…LLFY), 254–274 (VVFV…VGVI), and 287–307 (AVAT…AAIA). A disordered region spans residues 355-438 (RGHPRKKLFP…KEPSDKSVDS (84 aa)). Low complexity-rich tracts occupy residues 374 to 390 (SLLS…ASSM) and 404 to 413 (TVTPQTTPTT). Serine 422 carries the post-translational modification Phosphoserine. A compositionally biased stretch (basic and acidic residues) spans 425–438 (IGEKKEPSDKSVDS).

Belongs to the TMEM184 family. In terms of tissue distribution, widely expressed with higher expression in lung, kidney, spleen, pancreas, thymus, prostate, testis, ovary, small intestine and thyroid.

The protein resides in the membrane. Its function is as follows. Possible tumor suppressor which may play a role in cell growth. In Homo sapiens (Human), this protein is Transmembrane protein 184C (TMEM184C).